The chain runs to 652 residues: Acetyl-coenzyme A synthetase (652 aa).

Residues 191–194 (RAGR), T311, and N335 each bind CoA. ATP contacts are provided by residues 387–389 (GEP), 411–416 (DTWWQT), D500, and R515. Residue S523 coordinates CoA. Position 526 (R526) interacts with ATP. Positions 537, 539, and 542 each coordinate Mg(2+). R584 is a CoA binding site. At K609 the chain carries N6-acetyllysine; by autocatalysis.

The protein belongs to the ATP-dependent AMP-binding enzyme family. As to quaternary structure, forms a 1:1 complex with CobB/NAD-dependent deacetylase. Mg(2+) serves as cofactor. Post-translationally, autoacetylated. Deacetylation by CobB activates the enzyme.

The enzyme catalyses acetate + ATP + CoA = acetyl-CoA + AMP + diphosphate. In terms of biological role, catalyzes the conversion of acetate into acetyl-CoA (AcCoA), an essential intermediate at the junction of anabolic and catabolic pathways. Acs undergoes a two-step reaction. In the first half reaction, Acs combines acetate with ATP to form acetyl-adenylate (AcAMP) intermediate. In the second half reaction, it can then transfer the acetyl group from AcAMP to the sulfhydryl group of CoA, forming the product AcCoA. Enables the cell to use acetate during aerobic growth to generate energy via the TCA cycle, and biosynthetic compounds via the glyoxylate shunt. Acetylates CheY, the response regulator involved in flagellar movement and chemotaxis. The polypeptide is Acetyl-coenzyme A synthetase (Escherichia coli (strain K12)).